Reading from the N-terminus, the 376-residue chain is MAKQDYYEILGVSKTAEEREIKKAYKRLAMKYHPDRNQGDKEAETKFKEIKEAYEVLTDSQKRAAYDQYGHAAFEQGGMGGGGFGGGADFSDIFGDVFGDIFGGGRGRQRAARGADLRYNMELTLEEAVRGVTKEIRIPTLEECDVCHGSGAKPGTQPQTCPTCHGSGQVQMRQGFFAVQQTCPHCQGRGTLIKDPCNKCHGHGRVERSKTLSVKIPAGVDTGDRIRLAGEGEAGEHGAPAGDLYVQVQVKQHPIFEREGNNLYCEVPINFAMAALGGEIEVPTLDGRVKLKVPGETQTGKLFRMRGKGVKSVRGGAQGDLLCRVVVETPVGLNEKQKQLLQELQESFGGPTGEHNSPRSKSFFDGVKKFFDDLTR.

A J domain is found at Asp5–Gly70. The CR-type zinc finger occupies Gly131 to Ser209. Zn(2+) contacts are provided by Cys144, Cys147, Cys161, Cys164, Cys183, Cys186, Cys197, and Cys200. CXXCXGXG motif repeat units lie at residues Cys144–Gly151, Cys161–Gly168, Cys183–Gly190, and Cys197–Gly204.

The protein belongs to the DnaJ family. As to quaternary structure, homodimer. The cofactor is Zn(2+).

The protein resides in the cytoplasm. Its function is as follows. Participates actively in the response to hyperosmotic and heat shock by preventing the aggregation of stress-denatured proteins and by disaggregating proteins, also in an autonomous, DnaK-independent fashion. Unfolded proteins bind initially to DnaJ; upon interaction with the DnaJ-bound protein, DnaK hydrolyzes its bound ATP, resulting in the formation of a stable complex. GrpE releases ADP from DnaK; ATP binding to DnaK triggers the release of the substrate protein, thus completing the reaction cycle. Several rounds of ATP-dependent interactions between DnaJ, DnaK and GrpE are required for fully efficient folding. Also involved, together with DnaK and GrpE, in the DNA replication of plasmids through activation of initiation proteins. In Escherichia coli O157:H7 (strain EC4115 / EHEC), this protein is Chaperone protein DnaJ.